Reading from the N-terminus, the 358-residue chain is Peptide chain release factor 1 (358 aa).

Position 237 is an N5-methylglutamine (glutamine 237).

The protein belongs to the prokaryotic/mitochondrial release factor family. Methylated by PrmC. Methylation increases the termination efficiency of RF1.

The protein localises to the cytoplasm. Functionally, peptide chain release factor 1 directs the termination of translation in response to the peptide chain termination codons UAG and UAA. In Streptomyces coelicolor (strain ATCC BAA-471 / A3(2) / M145), this protein is Peptide chain release factor 1.